A 319-amino-acid polypeptide reads, in one-letter code: MAVPQSIPPPTAAPIESKDQVFARSKAFWDNYLRGRPQVPPSFFQRIYRYHREHGGRFGTVHDVGAGIGPYAGELRSQFPHVIVSDIVPKNVQLAEAHLGRDGFRYRAAPVEVADDLPPGSVDLAFATNVMHFADQHAAMQAIATQLRPGGTFACAGFGPARFDDPDIQDVWERISQQGGRILLGMAEHPPDTINVMSRSSKEYNVAPLEPQWFRPGALRIRLNMAQGGITGLLPPERQQEVTDPDFAGPRDVVVYETNEEWRFETDWEGFLQHFRSFPHAGADPAAFTGLLQELKDLLDEGRCLRGCWPATLILATRR.

Residues 63-155 (DVGAGIGPYA…QLRPGGTFAC (93 aa)) are methyltransferase domain.

Belongs to the methyltransferase superfamily. In terms of tissue distribution, specifically expressed in conidia.

The protein operates within secondary metabolite biosynthesis. Its function is as follows. Methyltransferase; part of the gene cluster that mediates the biosynthesis of trypacidin, a mycotoxin with antiprotozoal activity and that plays a role in the infection process. The pathway begins with the synthesis of atrochrysone thioester by the polyketide synthase (PKS) tpcC. The atrochrysone carboxyl ACP thioesterase tpcB then breaks the thioester bond and releases the atrochrysone carboxylic acid from tpcC. The decarboxylase tpcK converts atrochrysone carboxylic acid to atrochrysone which is further reduced into emodin anthrone. The next step is performed by the emodin anthrone oxygenase tpcL that catalyzes the oxidation of emodinanthrone to emodin. Emodin O-methyltransferase encoded by tpcA catalyzes methylation of the 8-hydroxy group of emodin to form questin. Ring cleavage of questin by questin oxidase tpcI leads to desmethylsulochrin via several intermediates including questin epoxide. Another methylation step catalyzed by tpcM leads to the formation of sulochrin which is further converted to monomethylsulfochrin by tpcH. Finally, the tpcJ catalyzes the conversion of monomethylsulfochrin to trypacidin. Trypacidin is toxic for human pulmonary and bronchial epithelial cells by initiating the intracellular formation of nitric oxide (NO) and hydrogen peroxide (H(2)O(2)), thus triggering host necrotic cell death. The trypacidin pathway is also able to produce endocrocin via a distinct route from the endocrocin Enc pathway. The chain is Methyltransferase tpcM from Aspergillus fumigatus (strain ATCC MYA-4609 / CBS 101355 / FGSC A1100 / Af293) (Neosartorya fumigata).